The chain runs to 256 residues: Triosephosphate isomerase (256 aa).

9 to 11 is a substrate binding site; it reads NWK. The Electrophile role is filled by H95. Catalysis depends on E167, which acts as the Proton acceptor. Residues G173, S213, and 234 to 235 each bind substrate; that span reads GG.

The protein belongs to the triosephosphate isomerase family. Homodimer.

The protein resides in the cytoplasm. It carries out the reaction D-glyceraldehyde 3-phosphate = dihydroxyacetone phosphate. The protein operates within carbohydrate biosynthesis; gluconeogenesis. It functions in the pathway carbohydrate degradation; glycolysis; D-glyceraldehyde 3-phosphate from glycerone phosphate: step 1/1. Its function is as follows. Involved in the gluconeogenesis. Catalyzes stereospecifically the conversion of dihydroxyacetone phosphate (DHAP) to D-glyceraldehyde-3-phosphate (G3P). In Symbiobacterium thermophilum (strain DSM 24528 / JCM 14929 / IAM 14863 / T), this protein is Triosephosphate isomerase.